The primary structure comprises 286 residues: 4-hydroxybenzoate octaprenyltransferase (286 aa).

7 helical membrane-spanning segments follow: residues 21–40, 95–115, 142–162, 167–187, 210–230, 235–255, and 266–286; these read GTLL…AGGM, ILFV…NGLV, FLGI…TGEV, WWLF…YAMV, QIIG…GWSA, LYGL…MLIF, and FLNN…DYLI.

The protein belongs to the UbiA prenyltransferase family. Mg(2+) serves as cofactor.

The protein localises to the cell inner membrane. It catalyses the reaction all-trans-octaprenyl diphosphate + 4-hydroxybenzoate = 4-hydroxy-3-(all-trans-octaprenyl)benzoate + diphosphate. Its pathway is cofactor biosynthesis; ubiquinone biosynthesis. Catalyzes the prenylation of para-hydroxybenzoate (PHB) with an all-trans polyprenyl group. Mediates the second step in the final reaction sequence of ubiquinone-8 (UQ-8) biosynthesis, which is the condensation of the polyisoprenoid side chain with PHB, generating the first membrane-bound Q intermediate 3-octaprenyl-4-hydroxybenzoate. The chain is 4-hydroxybenzoate octaprenyltransferase from Shewanella baltica (strain OS223).